A 354-amino-acid chain; its full sequence is Glucose 1-dehydrogenase (354 aa).

Residues 1–27 (MKVIGVTRDDDGPQLLERERPSPDPGE) form a disordered region. Positions 7–22 (TRDDDGPQLLERERPS) are enriched in basic and acidic residues. Aspartate 38 lines the Zn(2+) pocket. Threonine 40 is a binding site for substrate. Zn(2+) contacts are provided by histidine 63 and glutamate 64. The interval 91 to 110 (PNGETNEYFRRGEPDMAPDG) is disordered. Substrate contacts are provided by glutamate 114 and glutamate 150. Glutamate 150 contributes to the Zn(2+) binding site. NADP(+)-binding positions include 181–184 (NGSL), 204–205 (RR), 269–271 (LGI), and 298–300 (TVN). Asparagine 300 is a substrate binding site.

The protein belongs to the zinc-containing alcohol dehydrogenase family. Glucose 1-dehydrogenase subfamily. Requires Zn(2+) as cofactor.

The enzyme catalyses D-glucose + NAD(+) = D-glucono-1,5-lactone + NADH + H(+). It catalyses the reaction D-glucose + NADP(+) = D-glucono-1,5-lactone + NADPH + H(+). Functionally, catalyzes the NAD(P)(+)-dependent oxidation of D-glucose to D-gluconate via gluconolactone. Can utilize both NAD(+) and NADP(+) as electron acceptor. Is involved in the degradation of glucose through a modified Entner-Doudoroff pathway. In Haloarcula marismortui (strain ATCC 43049 / DSM 3752 / JCM 8966 / VKM B-1809) (Halobacterium marismortui), this protein is Glucose 1-dehydrogenase.